The sequence spans 150 residues: Cytochrome c oxidase subunit 5A, mitochondrial (150 aa).

The N-terminal 41 residues, Met-1–Tyr-41, are a transit peptide targeting the mitochondrion. The SIFI-degron motif lies at Leu-2 to Ala-17. Lys-87 and Lys-113 each carry N6-acetyllysine. The residue at position 141 (Thr-141) is a Phosphothreonine.

It belongs to the cytochrome c oxidase subunit 5A family. In terms of assembly, component of the cytochrome c oxidase (complex IV, CIV), a multisubunit enzyme composed of 14 subunits. The complex is composed of a catalytic core of 3 subunits MT-CO1, MT-CO2 and MT-CO3, encoded in the mitochondrial DNA, and 11 supernumerary subunits COX4I, COX5A, COX5B, COX6A, COX6B, COX6C, COX7A, COX7B, COX7C, COX8 and NDUFA4, which are encoded in the nuclear genome. The complex exists as a monomer or a dimer and forms supercomplexes (SCs) in the inner mitochondrial membrane with NADH-ubiquinone oxidoreductase (complex I, CI) and ubiquinol-cytochrome c oxidoreductase (cytochrome b-c1 complex, complex III, CIII), resulting in different assemblies (supercomplex SCI(1)III(2)IV(1) and megacomplex MCI(2)III(2)IV(2)). Interacts with AFG1L. Interacts with RAB5IF. In response to mitochondrial stress, the precursor protein is ubiquitinated by the SIFI complex in the cytoplasm before mitochondrial import, leading to its degradation. Within the SIFI complex, UBR4 initiates ubiquitin chain that are further elongated or branched by KCMF1.

It localises to the mitochondrion inner membrane. Its pathway is energy metabolism; oxidative phosphorylation. Component of the cytochrome c oxidase, the last enzyme in the mitochondrial electron transport chain which drives oxidative phosphorylation. The respiratory chain contains 3 multisubunit complexes succinate dehydrogenase (complex II, CII), ubiquinol-cytochrome c oxidoreductase (cytochrome b-c1 complex, complex III, CIII) and cytochrome c oxidase (complex IV, CIV), that cooperate to transfer electrons derived from NADH and succinate to molecular oxygen, creating an electrochemical gradient over the inner membrane that drives transmembrane transport and the ATP synthase. Cytochrome c oxidase is the component of the respiratory chain that catalyzes the reduction of oxygen to water. Electrons originating from reduced cytochrome c in the intermembrane space (IMS) are transferred via the dinuclear copper A center (CU(A)) of subunit 2 and heme A of subunit 1 to the active site in subunit 1, a binuclear center (BNC) formed by heme A3 and copper B (CU(B)). The BNC reduces molecular oxygen to 2 water molecules using 4 electrons from cytochrome c in the IMS and 4 protons from the mitochondrial matrix. In Pan troglodytes (Chimpanzee), this protein is Cytochrome c oxidase subunit 5A, mitochondrial (COX5A).